Reading from the N-terminus, the 252-residue chain is Hydroxyacylglutathione hydrolase (252 aa).

His54, His56, Asp58, His59, His111, Asp128, and His166 together coordinate Zn(2+).

Belongs to the metallo-beta-lactamase superfamily. Glyoxalase II family. Monomer. Requires Zn(2+) as cofactor.

The catalysed reaction is an S-(2-hydroxyacyl)glutathione + H2O = a 2-hydroxy carboxylate + glutathione + H(+). It functions in the pathway secondary metabolite metabolism; methylglyoxal degradation; (R)-lactate from methylglyoxal: step 2/2. Functionally, thiolesterase that catalyzes the hydrolysis of S-D-lactoyl-glutathione to form glutathione and D-lactic acid. The chain is Hydroxyacylglutathione hydrolase from Vibrio cholerae serotype O1 (strain ATCC 39541 / Classical Ogawa 395 / O395).